The following is a 388-amino-acid chain: Succinate--CoA ligase [ADP-forming] subunit beta (388 aa).

Residues 9-244 (KEILRKFGVA…LDEEDPAEIE (236 aa)) enclose the ATP-grasp domain. ATP contacts are provided by residues K46, 53 to 55 (GRG), E99, A102, and E107. Residues N199 and D213 each contribute to the Mg(2+) site. Substrate is bound by residues N264 and 321-323 (GIM).

This sequence belongs to the succinate/malate CoA ligase beta subunit family. As to quaternary structure, heterotetramer of two alpha and two beta subunits. Mg(2+) serves as cofactor.

It catalyses the reaction succinate + ATP + CoA = succinyl-CoA + ADP + phosphate. The catalysed reaction is GTP + succinate + CoA = succinyl-CoA + GDP + phosphate. Its pathway is carbohydrate metabolism; tricarboxylic acid cycle; succinate from succinyl-CoA (ligase route): step 1/1. Functionally, succinyl-CoA synthetase functions in the citric acid cycle (TCA), coupling the hydrolysis of succinyl-CoA to the synthesis of either ATP or GTP and thus represents the only step of substrate-level phosphorylation in the TCA. The beta subunit provides nucleotide specificity of the enzyme and binds the substrate succinate, while the binding sites for coenzyme A and phosphate are found in the alpha subunit. The sequence is that of Succinate--CoA ligase [ADP-forming] subunit beta from Burkholderia cenocepacia (strain ATCC BAA-245 / DSM 16553 / LMG 16656 / NCTC 13227 / J2315 / CF5610) (Burkholderia cepacia (strain J2315)).